The chain runs to 419 residues: UDP-N-acetylglucosamine 1-carboxyvinyltransferase (419 aa).

22–23 contributes to the phosphoenolpyruvate binding site; it reads KN. A UDP-N-acetyl-alpha-D-glucosamine-binding site is contributed by Arg-95. The active-site Proton donor is Cys-119. Residue Cys-119 is modified to 2-(S-cysteinyl)pyruvic acid O-phosphothioketal. Asp-308 and Ile-330 together coordinate UDP-N-acetyl-alpha-D-glucosamine.

It belongs to the EPSP synthase family. MurA subfamily.

The protein localises to the cytoplasm. It carries out the reaction phosphoenolpyruvate + UDP-N-acetyl-alpha-D-glucosamine = UDP-N-acetyl-3-O-(1-carboxyvinyl)-alpha-D-glucosamine + phosphate. It functions in the pathway cell wall biogenesis; peptidoglycan biosynthesis. In terms of biological role, cell wall formation. Adds enolpyruvyl to UDP-N-acetylglucosamine. In Rickettsia bellii (strain OSU 85-389), this protein is UDP-N-acetylglucosamine 1-carboxyvinyltransferase.